Here is a 295-residue protein sequence, read N- to C-terminus: GTPase Era (295 aa).

An Era-type G domain is found at 4-171 (KSGFVTIIGR…IKQIVSFLPE (168 aa)). The segment at 12–19 (GRPNVGKS) is G1. Residue 12-19 (GRPNVGKS) coordinates GTP. The G2 stretch occupies residues 38-42 (QTTRN). The segment at 59 to 62 (DTPG) is G3. GTP is bound by residues 59–63 (DTPGI) and 121–124 (NKID). A G4 region spans residues 121 to 124 (NKID). The tract at residues 150-152 (ISA) is G5. Positions 202-280 (LDQEIPHGIA…FLELWVKVNE (79 aa)) constitute a KH type-2 domain.

It belongs to the TRAFAC class TrmE-Era-EngA-EngB-Septin-like GTPase superfamily. Era GTPase family. As to quaternary structure, monomer.

It is found in the cytoplasm. Its subcellular location is the cell membrane. An essential GTPase that binds both GDP and GTP, with rapid nucleotide exchange. Plays a role in 16S rRNA processing and 30S ribosomal subunit biogenesis and possibly also in cell cycle regulation and energy metabolism. The sequence is that of GTPase Era from Alkaliphilus metalliredigens (strain QYMF).